Here is a 206-residue protein sequence, read N- to C-terminus: Cytochrome c oxidase subunit 3 (206 aa).

Helical transmembrane passes span 26-46, 68-88, 97-117, 143-163, and 185-205; these read FLGF…FFGT, LVFI…LAMF, AMMI…GFEI, LVGL…VLLI, and WHFI…MGVG.

The protein belongs to the cytochrome c oxidase subunit 3 family.

It localises to the cell membrane. It catalyses the reaction 4 Fe(II)-[cytochrome c] + O2 + 8 H(+)(in) = 4 Fe(III)-[cytochrome c] + 2 H2O + 4 H(+)(out). The polypeptide is Cytochrome c oxidase subunit 3 (ctaE) (Alkalihalophilus pseudofirmus (strain ATCC BAA-2126 / JCM 17055 / OF4) (Bacillus pseudofirmus)).